The following is a 341-amino-acid chain: Fructose-1,6-bisphosphatase, cytosolic (341 aa).

Mg(2+) is bound by residues Glu-71, Glu-100, Asp-121, Leu-123, and Asp-124. Residues 124–127 (DGCS), Asn-215, Tyr-247, Tyr-267, and Lys-277 each bind substrate. Position 283 (Glu-283) interacts with Mg(2+).

Belongs to the FBPase class 1 family. Mg(2+) is required as a cofactor.

The protein resides in the cytoplasm. The enzyme catalyses beta-D-fructose 1,6-bisphosphate + H2O = beta-D-fructose 6-phosphate + phosphate. The protein is Fructose-1,6-bisphosphatase, cytosolic of Beta vulgaris (Sugar beet).